The following is a 350-amino-acid chain: GDSL esterase/lipase At4g10955 (350 aa).

The protein belongs to the 'GDSL' lipolytic enzyme family.

The polypeptide is GDSL esterase/lipase At4g10955 (Arabidopsis thaliana (Mouse-ear cress)).